The chain runs to 219 residues: Cell division protein B2 (219 aa).

Its function is as follows. Part of a cell division machinery. This chain is Cell division protein B2, found in Sulfolobus acidocaldarius (strain ATCC 33909 / DSM 639 / JCM 8929 / NBRC 15157 / NCIMB 11770).